A 345-amino-acid chain; its full sequence is MDYKSAGVDVEAGRAFVQRIKASVEATHRPEVIGGLGGFGGLMSLPAGMRKPLLVSGTDGVGTKLELAQEHGSHHGVGIDLVAMCVNDVITSGAAPLFFLDYMATGALAPSAMAEVVEGIADGCRQSGCALLGGETAEMPGFYPQGRYDIAGFCVAVVEEDELIDGQRIQPGDSVIGVASSGVHSNGFSLVRKVLEKANADANTVYGDNQRPLIGDLLAPTTLYADLVQHLMQSGCELHGMAHITGGGLPENLPRCLPEGCSARIDASSWTRPTLFRWLQEAGNIPERDLWHTFNLGIGFCLVVPARSEDAVIEHCRGKNHQAWLIGNVTSNTPGNAAVLEGVPA.

It belongs to the AIR synthase family.

The protein resides in the cytoplasm. The enzyme catalyses 2-formamido-N(1)-(5-O-phospho-beta-D-ribosyl)acetamidine + ATP = 5-amino-1-(5-phospho-beta-D-ribosyl)imidazole + ADP + phosphate + H(+). Its pathway is purine metabolism; IMP biosynthesis via de novo pathway; 5-amino-1-(5-phospho-D-ribosyl)imidazole from N(2)-formyl-N(1)-(5-phospho-D-ribosyl)glycinamide: step 2/2. This Synechococcus sp. (strain CC9605) protein is Phosphoribosylformylglycinamidine cyclo-ligase.